A 142-amino-acid polypeptide reads, in one-letter code: Large ribosomal subunit protein uL11 (142 aa).

It belongs to the universal ribosomal protein uL11 family. Part of the ribosomal stalk of the 50S ribosomal subunit. Interacts with L10 and the large rRNA to form the base of the stalk. L10 forms an elongated spine to which L12 dimers bind in a sequential fashion forming a multimeric L10(L12)X complex. In terms of processing, one or more lysine residues are methylated.

Its function is as follows. Forms part of the ribosomal stalk which helps the ribosome interact with GTP-bound translation factors. The sequence is that of Large ribosomal subunit protein uL11 from Vibrio vulnificus (strain CMCP6).